Consider the following 111-residue polypeptide: Prostatic steroid-binding protein C1 (111 aa).

An N-terminal signal peptide occupies residues Met-1–Ala-23.

This sequence belongs to the secretoglobin family. Lipophilin subfamily. As to quaternary structure, prostatein is composed of three different peptides called C1, C2 and C3. These form covalent C1:C3 (F) and C2:C3 (S) heterodimers whose noncovalent association forms tetrameric (C1:C3/C3:C2) prostatein molecules.

The protein resides in the secreted. Its function is as follows. Part of prostatein which is the major secretory glycoprotein of ventral prostate gland. The polypeptide is Prostatic steroid-binding protein C1 (Psbpc1) (Rattus norvegicus (Rat)).